A 681-amino-acid chain; its full sequence is MSGPAHFQGTIMQVKAEIQRLTAEINRHNIAYYVQDAPSIPDAEYDRLMNQLKALEAEYPQFAEPDSPTQRVGGAALNKFEQVSHLKPMLSLDNAFNEEDFVAFDKRLTDKVGSQVYCAEPKLDGLAVSLIYRNGVLERAATRGDGAVGEDISVNMRTIKSVPLRLQGDDIPALVEVRGEVFMPRAAFEALNDRARAKGDKLFVNPRNAAAGSLRQLDSKITAERSLAFYAYALGVVQDDNGADLVLAPTHKGQLERLTAFGLPVSKEVKLCEGLAEVMAYYADILKRRDELAFEIDGVVIKVNDIEAQQQLGFVARAPRWAIAFKFPAQEEMTVLEGVDFQVGRTGAVTPVARLKPVFVGGVTVSNATLHNGDEIARLGVKIGDTVIIRRAGDVIPQIVAVVPERRPDEAQDILFPDNCPVCGSLVERIEGEAVARCSGGLFCEAQRREAIKHFASRKAMYIDGMGDKVVEQLIDKELVESPADLFKLNVSKLTMLERMGTKSATNLVAAIEEAKTTTLPKFLYALGIREVGEATAANLAKHFRSLEAIRDADVDALIQVEDVGTVVAQHVAHFFAQPHNLEVIDALIAAGVNWPAIEKPSADAQPLLGQTWVLTGTLTSLGRTEAKAKLEALGAKVAGSVSKNTHCVVAGEAAGSKLAKAQELGIPVLDEAGLIELIGL.

Residues 42–46 (DAEYD), 91–92 (SL), and Glu-120 each bind NAD(+). Catalysis depends on Lys-122, which acts as the N6-AMP-lysine intermediate. Residues Arg-143, Glu-180, Lys-302, and Lys-326 each contribute to the NAD(+) site. Zn(2+) is bound by residues Cys-420, Cys-423, Cys-438, and Cys-444. The BRCT domain occupies 603–681 (ADAQPLLGQT…EAGLIELIGL (79 aa)).

Belongs to the NAD-dependent DNA ligase family. LigA subfamily. The cofactor is Mg(2+). Mn(2+) serves as cofactor.

It catalyses the reaction NAD(+) + (deoxyribonucleotide)n-3'-hydroxyl + 5'-phospho-(deoxyribonucleotide)m = (deoxyribonucleotide)n+m + AMP + beta-nicotinamide D-nucleotide.. Its function is as follows. DNA ligase that catalyzes the formation of phosphodiester linkages between 5'-phosphoryl and 3'-hydroxyl groups in double-stranded DNA using NAD as a coenzyme and as the energy source for the reaction. It is essential for DNA replication and repair of damaged DNA. The polypeptide is DNA ligase (Shewanella amazonensis (strain ATCC BAA-1098 / SB2B)).